A 263-amino-acid chain; its full sequence is 3-methyl-2-oxobutanoate hydroxymethyltransferase (263 aa).

Mg(2+)-binding residues include D46 and D85. Residues 46 to 47 (DS), D85, and K115 each bind 3-methyl-2-oxobutanoate. Residue E117 coordinates Mg(2+). E180 acts as the Proton acceptor in catalysis.

It belongs to the PanB family. In terms of assembly, homodecamer; pentamer of dimers. Mg(2+) is required as a cofactor.

The protein localises to the cytoplasm. It catalyses the reaction 3-methyl-2-oxobutanoate + (6R)-5,10-methylene-5,6,7,8-tetrahydrofolate + H2O = 2-dehydropantoate + (6S)-5,6,7,8-tetrahydrofolate. It participates in cofactor biosynthesis; (R)-pantothenate biosynthesis; (R)-pantoate from 3-methyl-2-oxobutanoate: step 1/2. In terms of biological role, catalyzes the reversible reaction in which hydroxymethyl group from 5,10-methylenetetrahydrofolate is transferred onto alpha-ketoisovalerate to form ketopantoate. In Desulforapulum autotrophicum (strain ATCC 43914 / DSM 3382 / VKM B-1955 / HRM2) (Desulfobacterium autotrophicum), this protein is 3-methyl-2-oxobutanoate hydroxymethyltransferase.